The following is a 133-amino-acid chain: Ribonuclease P protein component (133 aa).

The protein belongs to the RnpA family. As to quaternary structure, consists of a catalytic RNA component (M1 or rnpB) and a protein subunit.

It carries out the reaction Endonucleolytic cleavage of RNA, removing 5'-extranucleotides from tRNA precursor.. Functionally, RNaseP catalyzes the removal of the 5'-leader sequence from pre-tRNA to produce the mature 5'-terminus. It can also cleave other RNA substrates such as 4.5S RNA. The protein component plays an auxiliary but essential role in vivo by binding to the 5'-leader sequence and broadening the substrate specificity of the ribozyme. The protein is Ribonuclease P protein component of Bartonella quintana (strain Toulouse) (Rochalimaea quintana).